Consider the following 230-residue polypeptide: Heptaprenylglyceryl phosphate synthase (230 aa).

K12 contributes to the sn-glycerol 1-phosphate binding site. Positions 14 and 40 each coordinate Mg(2+). Residues 159–164 (YIEYSG), G189, and 209–210 (GD) each bind sn-glycerol 1-phosphate.

This sequence belongs to the GGGP/HepGP synthase family. Group I subfamily. In terms of assembly, homodimer. It depends on Mg(2+) as a cofactor.

It carries out the reaction sn-glycerol 1-phosphate + all-trans-heptaprenyl diphosphate = 3-heptaprenyl-sn-glycero-1-phosphate + diphosphate. It functions in the pathway membrane lipid metabolism; glycerophospholipid metabolism. Prenyltransferase that catalyzes in vivo the transfer of the heptaprenyl moiety of heptaprenyl pyrophosphate (HepPP; 35 carbon atoms) to the C3 hydroxyl of sn-glycerol-1-phosphate (G1P), producing heptaprenylglyceryl phosphate (HepGP). This reaction is an ether-bond-formation step in the biosynthesis of archaea-type G1P-based membrane lipids found in Bacillales. This Staphylococcus aureus (strain bovine RF122 / ET3-1) protein is Heptaprenylglyceryl phosphate synthase.